The chain runs to 239 residues: Endolytic peptidoglycan transglycosylase RlpA (239 aa).

The first 25 residues, 1–25 (MTLTRKTLFLLTAAFGTHSLQTASA), serve as a signal peptide directing secretion. The SPOR domain maps to 160–239 (VAENKDIFID…GMVRAVLTAG (80 aa)).

The protein belongs to the RlpA family.

In terms of biological role, lytic transglycosylase with a strong preference for naked glycan strands that lack stem peptides. This is Endolytic peptidoglycan transglycosylase RlpA from Neisseria meningitidis serogroup B (strain ATCC BAA-335 / MC58).